The chain runs to 250 residues: Ribonuclease PH (250 aa).

Residues arginine 99 and 137–139 contribute to the phosphate site; that span reads GTR.

Belongs to the RNase PH family. In terms of assembly, homohexameric ring arranged as a trimer of dimers.

It catalyses the reaction tRNA(n+1) + phosphate = tRNA(n) + a ribonucleoside 5'-diphosphate. Its function is as follows. Phosphorolytic 3'-5' exoribonuclease that plays an important role in tRNA 3'-end maturation. Removes nucleotide residues following the 3'-CCA terminus of tRNAs; can also add nucleotides to the ends of RNA molecules by using nucleoside diphosphates as substrates, but this may not be physiologically important. Probably plays a role in initiation of 16S rRNA degradation (leading to ribosome degradation) during starvation. This is Ribonuclease PH from Bordetella parapertussis (strain 12822 / ATCC BAA-587 / NCTC 13253).